The chain runs to 407 residues: Argininosuccinate synthase (407 aa).

ATP is bound by residues 13-21 and A40; that span reads AYSGGLDTS. 2 residues coordinate L-citrulline: Y91 and S96. G121 contributes to the ATP binding site. 3 residues coordinate L-aspartate: T123, N127, and D128. L-citrulline is bound at residue N127. R131, S182, S191, E267, and Y279 together coordinate L-citrulline.

This sequence belongs to the argininosuccinate synthase family. Type 1 subfamily. As to quaternary structure, homotetramer.

The protein resides in the cytoplasm. The enzyme catalyses L-citrulline + L-aspartate + ATP = 2-(N(omega)-L-arginino)succinate + AMP + diphosphate + H(+). The protein operates within amino-acid biosynthesis; L-arginine biosynthesis; L-arginine from L-ornithine and carbamoyl phosphate: step 2/3. The protein is Argininosuccinate synthase of Agrobacterium fabrum (strain C58 / ATCC 33970) (Agrobacterium tumefaciens (strain C58)).